Consider the following 365-residue polypeptide: MAVMPPRTLLLLLSGALALTQTWAGSHSMRYFYTSVSRPGRGEPRFIAVGYVDDTQFVRFDSDAASQRMEPRAPWIEQEGPEYWDQETRNMKASAQTDRVDLGTLRGYYNQSEDGSHTIQIMYGCDVGSDGRFLRGYRQDAYDGKDYIALNEDLRSWTAAAMAAQITKRKWEAAHAAEQLRAYLEGRCVEWLRRYLENGKETLQRTDPPKTHMTHHPISDHEATLRCWALGFYPAVITLTWQRDGEDQTQDTELVETRPAGDGTFQKWAAVVVPSGEEQRYTCHVQHEGLPKPLTLRWEPSSQPTIPIVGIIAGLVLLGAVITGAVVAAVMWRRKSSDRKGGSYTQAASSDSAQGSDVSLTACKV.

A signal peptide spans 1-24; the sequence is MAVMPPRTLLLLLSGALALTQTWA. The alpha-1 stretch occupies residues 25 to 114; sequence GSHSMRYFYT…LRGYYNQSED (90 aa). Topologically, residues 25-308 are extracellular; it reads GSHSMRYFYT…EPSSQPTIPI (284 aa). An N-linked (GlcNAc...) asparagine glycan is attached at Asn-110. An alpha-2 region spans residues 115–206; that stretch reads GSHTIQIMYG…ENGKETLQRT (92 aa). Intrachain disulfides connect Cys-125/Cys-188 and Cys-227/Cys-283. Positions 207–298 are alpha-3; the sequence is DPPKTHMTHH…GLPKPLTLRW (92 aa). In terms of domain architecture, Ig-like C1-type spans 209-295; the sequence is PKTHMTHHPI…QHEGLPKPLT (87 aa). A connecting peptide region spans residues 299–308; it reads EPSSQPTIPI. The helical transmembrane segment at 309-332 threads the bilayer; sequence VGIIAGLVLLGAVITGAVVAAVMW. Over 333 to 365 the chain is Cytoplasmic; the sequence is RRKSSDRKGGSYTQAASSDSAQGSDVSLTACKV. The segment at 339 to 360 is disordered; it reads RKGGSYTQAASSDSAQGSDVSL. Phosphoserine is present on Ser-343. Residue Tyr-344 is modified to Phosphotyrosine. Residues 346 to 359 are compositionally biased toward low complexity; the sequence is QAASSDSAQGSDVS. 5 positions are modified to phosphoserine: Ser-349, Ser-350, Ser-352, Ser-356, and Ser-359.

This sequence belongs to the MHC class I family. Heterodimer of an alpha chain and a beta chain (beta-2-microglobulin).

The protein resides in the membrane. Its function is as follows. Involved in the presentation of foreign antigens to the immune system. In Pan troglodytes (Chimpanzee), this protein is Patr class I histocompatibility antigen, A-108 alpha chain (Patr-A).